A 132-amino-acid polypeptide reads, in one-letter code: Small ribosomal subunit protein uS8 (132 aa).

The protein belongs to the universal ribosomal protein uS8 family. In terms of assembly, part of the 30S ribosomal subunit. Contacts proteins S5 and S12.

Functionally, one of the primary rRNA binding proteins, it binds directly to 16S rRNA central domain where it helps coordinate assembly of the platform of the 30S subunit. The sequence is that of Small ribosomal subunit protein uS8 from Syntrophobacter fumaroxidans (strain DSM 10017 / MPOB).